A 370-amino-acid chain; its full sequence is 5-hydroxytryptamine receptor 5B (370 aa).

The interval 1–36 (MEVSNLSGATPGLAFPPGPESCSDSPSSGRSMGSTP) is disordered. Over 1 to 48 (MEVSNLSGATPGLAFPPGPESCSDSPSSGRSMGSTPGGLILPGREPPF) the chain is Extracellular. Asparagine 5 is a glycosylation site (N-linked (GlcNAc...) asparagine). Over residues 20–36 (ESCSDSPSSGRSMGSTP) the composition is skewed to low complexity. The chain crosses the membrane as a helical span at residues 49 to 75 (SAFTVLVVTLLVLLIAATFLWNLLVLV). Over 76–88 (TILRVRAFHRVPH) the chain is Cytoplasmic. The chain crosses the membrane as a helical span at residues 89-115 (NLVASTAVSDVLVAVLVMPLSLVSELS). Topologically, residues 116-127 (AGRRWQLGRSLC) are extracellular. The cysteines at positions 127 and 205 are disulfide-linked. The helical transmembrane segment at 128 to 150 (HVWISFDVLCCTASIWNVAAIAL) threads the bilayer. Aspartate 134 is a binding site for serotonin. The Cytoplasmic portion of the chain corresponds to 151-168 (DRYWTITRHLQYTLRTRS). The chain crosses the membrane as a helical span at residues 169-189 (RASALMIAITWALSALIALAP). At 190–211 (LLFGWGEAYDARLQRCQVSQEP) the chain is on the extracellular side. The helical transmembrane segment at 212 to 233 (SYAVFSTCGAFYLPLAVVLFVY) threads the bilayer. Residues 234 to 300 (WKIYKAAKFR…QKEKRAAMMV (67 aa)) lie on the Cytoplasmic side of the membrane. A helical transmembrane segment spans residues 301–325 (GILIGVFVLCWIPFFLTELISPLCA). Residues 326 to 327 (CS) lie on the Extracellular side of the membrane. A helical transmembrane segment spans residues 328-352 (LPPIWKSIFLWLGYSNSFFNPLIYT). Residues 353–370 (AFNKNYNNAFKSLFTKQR) are Cytoplasmic-facing.

This sequence belongs to the G-protein coupled receptor 1 family. As to expression, expressed predominantly in the central nervous system; in the hippocampus, habenula, and the doral raphe.

It is found in the cell membrane. In terms of biological role, G-protein coupled receptor for 5-hydroxytryptamine (serotonin), a biogenic hormone that functions as a neurotransmitter, a hormone and a mitogen. Also functions as a receptor for ergot alkaloid derivatives and other psychoactive substances. Ligand binding causes a conformation change that triggers signaling via guanine nucleotide-binding proteins (G proteins) and modulates the activity of downstream effectors. Htr5b is coupled to G(i)/G(o) G alpha proteins and mediates inhibitory neurotransmission: signaling inhibits adenylate cyclase activity and activates a phosphatidylinositol-calcium second messenger system that regulates the release of Ca(2+) ions from intracellular stores. The sequence is that of 5-hydroxytryptamine receptor 5B from Mus musculus (Mouse).